A 136-amino-acid polypeptide reads, in one-letter code: Large ribosomal subunit protein uL3 (136 aa).

Gln-83 carries the post-translational modification N5-methylglutamine.

It belongs to the universal ribosomal protein uL3 family. In terms of assembly, part of the 50S ribosomal subunit. Forms a cluster with proteins L14 and L19. In terms of processing, methylated by PrmB.

Functionally, one of the primary rRNA binding proteins, it binds directly near the 3'-end of the 23S rRNA, where it nucleates assembly of the 50S subunit. This chain is Large ribosomal subunit protein uL3 (rplC), found in Carsonella ruddii.